The following is a 648-amino-acid chain: Putative potassium transport protein DDB_G0292412 (648 aa).

Residues 48 to 68 (LFLLVILVQLGSTVLLTLPIV) form a helical membrane-spanning segment. Residue Asn81 is glycosylated (N-linked (GlcNAc...) asparagine). Disordered stretches follow at residues 106 to 145 (HDFKDDDDENDNNNNEENDDNDDESYQHNNNNNEEHDDND) and 223 to 261 (QQQQQPSTTTTTTTTTNSTLNKSTNNSTNNNNNTNDSQS). Positions 110 to 129 (DDDDENDNNNNEENDDNDDE) are enriched in acidic residues. A coiled-coil region spans residues 199–227 (IIQQQQQQQQQQQQQQQQQQQQQQQQQQQ). Asn239, Asn243, Asn247, Asn248, Asn254, and Asn257 each carry an N-linked (GlcNAc...) asparagine glycan. The next 6 helical transmembrane spans lie at 313 to 333 (LLVIIPCYIITIYILGFISIG), 353 to 373 (GWWWSLFHTFSAFNNAGLALF), 385 to 405 (FLLITLSILIFLGNTLFPVFL), 443 to 463 (VQLFVIWCIFNVSQIALMALL), 472 to 491 (NMNYGTILLNYYFSSISTRT), and 505 to 525 (SVLLLFVGLMFVSSYPFIISL). Residue Asn536 is glycosylated (N-linked (GlcNAc...) asparagine). Transmembrane regions (helical) follow at residues 550 to 570 (IFVPYICILFIAIFESQLLES), 571 to 591 (GVITVFQILFEAISAFGNVGL), and 592 to 612 (SISITLSTYSKLVFIALMLAG).

It belongs to the TrkH potassium transport family.

It localises to the membrane. May function as a potassium transporter. The sequence is that of Putative potassium transport protein DDB_G0292412 from Dictyostelium discoideum (Social amoeba).